A 659-amino-acid polypeptide reads, in one-letter code: Endoglucanase A (659 aa).

The catalytic stretch occupies residues 1–500 (MLIFETYLIL…SKLPNFPPKE (500 aa)). Catalysis depends on D101, which acts as the Nucleophile. The tract at residues 413–433 (NSPKHPHHRTAHGSWSNQLTN) is disordered. Active-site residues include H419, D457, and E466. The 158-residue stretch at 501-658 (QVEDEFFVEA…GVLVFGTLPD (158 aa)) folds into the CBM3 domain.

The protein belongs to the glycosyl hydrolase 9 (cellulase E) family.

The protein resides in the secreted. The enzyme catalyses Endohydrolysis of (1-&gt;4)-beta-D-glucosidic linkages in cellulose, lichenin and cereal beta-D-glucans.. Strongly inhibited by ZnCl(2) and by EDTA. In terms of biological role, active on carboxymethyl cellulose and carboxymethyl cellulose-RBB but not avicel, xanthan gum, carboxymethyl-curdulan-RBB or carboxymethyl-xylan-RBB. The sequence is that of Endoglucanase A (eglA) from Bacillus pumilus (Bacillus mesentericus).